Reading from the N-terminus, the 945-residue chain is Alanine--tRNA ligase (945 aa).

Zn(2+) contacts are provided by His564, His568, Cys666, and His670. Residues 911–945 are disordered; the sequence is SGGGRPDMAQAGGKDASKLPEALQQARETMTEKLG.

Belongs to the class-II aminoacyl-tRNA synthetase family. Zn(2+) is required as a cofactor.

The protein resides in the cytoplasm. It catalyses the reaction tRNA(Ala) + L-alanine + ATP = L-alanyl-tRNA(Ala) + AMP + diphosphate. In terms of biological role, catalyzes the attachment of alanine to tRNA(Ala) in a two-step reaction: alanine is first activated by ATP to form Ala-AMP and then transferred to the acceptor end of tRNA(Ala). Also edits incorrectly charged Ser-tRNA(Ala) and Gly-tRNA(Ala) via its editing domain. This chain is Alanine--tRNA ligase, found in Rhodopirellula baltica (strain DSM 10527 / NCIMB 13988 / SH1).